A 103-amino-acid chain; its full sequence is Co-chaperonin GroES (103 aa).

This sequence belongs to the GroES chaperonin family. Heptamer of 7 subunits arranged in a ring. Interacts with the chaperonin GroEL.

Its subcellular location is the cytoplasm. Its function is as follows. Together with the chaperonin GroEL, plays an essential role in assisting protein folding. The GroEL-GroES system forms a nano-cage that allows encapsulation of the non-native substrate proteins and provides a physical environment optimized to promote and accelerate protein folding. GroES binds to the apical surface of the GroEL ring, thereby capping the opening of the GroEL channel. The chain is Co-chaperonin GroES from Picosynechococcus sp. (strain ATCC 27264 / PCC 7002 / PR-6) (Agmenellum quadruplicatum).